Here is a 207-residue protein sequence, read N- to C-terminus: Small ribosomal subunit protein uS2 (207 aa).

This sequence belongs to the universal ribosomal protein uS2 family.

The polypeptide is Small ribosomal subunit protein uS2 (Methanocella arvoryzae (strain DSM 22066 / NBRC 105507 / MRE50)).